The chain runs to 794 residues: Protocadherin beta-6 (794 aa).

The first 27 residues, methionine 1 to serine 27, serve as a signal peptide directing secretion. Residues glutamate 28–leucine 688 lie on the Extracellular side of the membrane. Cadherin domains lie at valine 34–phenylalanine 132, methionine 137–phenylalanine 241, tyrosine 246–leucine 345, phenylalanine 350–phenylalanine 449, and tyrosine 454–valine 559. N-linked (GlcNAc...) asparagine glycosylation is present at asparagine 46. A disulfide bridge links cysteine 95 with cysteine 101. N-linked (GlcNAc...) asparagine glycosylation is present at asparagine 183. N-linked (GlcNAc...) asparagine glycosylation is present at asparagine 416. A glycan (N-linked (GlcNAc...) asparagine) is linked at asparagine 565. A Cadherin 6 domain is found at glycine 566–leucine 669. A helical transmembrane segment spans residues valine 689 to valine 709. Topologically, residues arginine 710 to serine 794 are cytoplasmic. The disordered stretch occupies residues proline 773–serine 794. Residues threonine 784–serine 794 show a composition bias toward polar residues.

In terms of assembly, forms homodimers in trans (molecules expressed by two different cells). Forms promiscuous heterodimers in cis (at the plasma membrane of the same cell) with other protocadherins.

The protein localises to the cell membrane. Functionally, calcium-dependent cell-adhesion protein involved in cells self-recognition and non-self discrimination. Thereby, it is involved in the establishment and maintenance of specific neuronal connections in the brain. The sequence is that of Protocadherin beta-6 from Pan troglodytes (Chimpanzee).